The chain runs to 314 residues: tRNA pseudouridine synthase B (314 aa).

Histidine 43 lines the substrate pocket. The Nucleophile role is filled by aspartate 48. Positions 76, 179, and 200 each coordinate substrate.

The protein belongs to the pseudouridine synthase TruB family. Type 1 subfamily.

The enzyme catalyses uridine(55) in tRNA = pseudouridine(55) in tRNA. In terms of biological role, responsible for synthesis of pseudouridine from uracil-55 in the psi GC loop of transfer RNAs. This Salmonella paratyphi A (strain ATCC 9150 / SARB42) protein is tRNA pseudouridine synthase B.